The sequence spans 345 residues: S-adenosylmethionine:tRNA ribosyltransferase-isomerase (345 aa).

The protein belongs to the QueA family. In terms of assembly, monomer.

It localises to the cytoplasm. It carries out the reaction 7-aminomethyl-7-carbaguanosine(34) in tRNA + S-adenosyl-L-methionine = epoxyqueuosine(34) in tRNA + adenine + L-methionine + 2 H(+). It participates in tRNA modification; tRNA-queuosine biosynthesis. Functionally, transfers and isomerizes the ribose moiety from AdoMet to the 7-aminomethyl group of 7-deazaguanine (preQ1-tRNA) to give epoxyqueuosine (oQ-tRNA). This Shewanella putrefaciens (strain CN-32 / ATCC BAA-453) protein is S-adenosylmethionine:tRNA ribosyltransferase-isomerase.